A 598-amino-acid chain; its full sequence is Transcriptional repressor tup12 (598 aa).

The tract at residues 118-177 is disordered; that stretch reads IASGVVPQSSKTKHGRNSVSFGKYGNAGPFNSDNSSKPLILNNGSSGGTPKNLRSPAIDS. WD repeat units lie at residues 285–325, 332–371, 374–413, 415–454, 456–495, 510–549, and 552–585; these read EPPI…AMVF, LITLLQEESSKREGDLYVRSVAFSPDGKYLATGVEDQQIR, DIAQKRVYRLLTGHEQEIYSLDFSKDGKTLVSGSGDRTVC, WDVEAGEQKLILHTDDGVTTVMFSPDGQFIAAGSLDKVIR, WTSSGTLVEQLHGHEESVYSVAFSPDGKYLVSGSLDNTIK, YKEGGICKQTFTGHKDFILSVTVSPDGKWIISGSKDRTIQ, and SPDSPHSQLTLQGHNNSVISVAVSPNGHCFATGS.

Belongs to the WD repeat TUP1 family.

In terms of biological role, transcriptional repressor. This chain is Transcriptional repressor tup12 (tup12), found in Schizosaccharomyces pombe (strain 972 / ATCC 24843) (Fission yeast).